Here is a 290-residue protein sequence, read N- to C-terminus: Ribosomal RNA small subunit methyltransferase A (290 aa).

Residues Asn-27, Leu-29, Gly-54, Glu-75, Asp-100, and Asn-125 each contribute to the S-adenosyl-L-methionine site.

It belongs to the class I-like SAM-binding methyltransferase superfamily. rRNA adenine N(6)-methyltransferase family. RsmA subfamily.

It is found in the cytoplasm. The catalysed reaction is adenosine(1518)/adenosine(1519) in 16S rRNA + 4 S-adenosyl-L-methionine = N(6)-dimethyladenosine(1518)/N(6)-dimethyladenosine(1519) in 16S rRNA + 4 S-adenosyl-L-homocysteine + 4 H(+). Functionally, specifically dimethylates two adjacent adenosines (A1518 and A1519) in the loop of a conserved hairpin near the 3'-end of 16S rRNA in the 30S particle. May play a critical role in biogenesis of 30S subunits. This chain is Ribosomal RNA small subunit methyltransferase A, found in Streptococcus pneumoniae (strain JJA).